Consider the following 410-residue polypeptide: Acetyltransferase aurG (410 aa).

The next 3 helical transmembrane spans lie at 3–23 (LWLVLANQVGLVGTLVLVVCF), 28–48 (SLVRPLLLPGITALVSYGLIL), and 59–79 (WSLVNLNTAGLFLQYLDVGLI). Over residues 90 to 99 (TSSRGGQPNA) the composition is skewed to polar residues. A disordered region spans residues 90–112 (TSSRGGQPNASLDLAGRKKPPSS). An N-linked (GlcNAc...) asparagine glycan is attached at Asn-98. 4 helical membrane-spanning segments follow: residues 157–177 (AMTLLWSVLVLDVMGLVGGDL), 219–239 (MYFSLQVVYSFLAIVFVMVGL), 300–320 (ILATFFVSGLLHLFCAEYSYG), and 364–384 (IGYVWVLLWFLWTSPAYFFPL).

It belongs to the wax synthase family.

The protein resides in the membrane. The protein operates within polyketide biosynthesis. Its function is as follows. Acetyltransferase; part of the gene cluster that mediates the biosynthesis of aurovertins, fungal polyketides that exhibit potent inhibition of adenosine triphosphate synthase. Tha biosynthesis starts with the HR-PKS aurA that selects propionate as the starter unit; synthesizes a hexa-ene chain through the repeated functions of the KR and DH domains in the first six iterations; selectively introduces three alpha-methyl substitutions at C4, C6, and C16 using the S-adensylmethionine-dependent cMET; and shuts off KR and DH in the last three iterations to afford a 1,3,5-triketo portion that can undergo intramolecular cyclization to yield the alpha-pyrone intermediate. AurE may act as a cyclase and enhances the rate of pyrone formation and product release of aurA. The methyltransferase aurB then methylates the C17 hydroxyl group. C17 methylation is required to initiate epoxidation by the downstream monooxygenase aurC. The monooxygenase aurC and the epoxide hydrolase aurD can iteratively transform the terminal triene portion of the methylated precursor into the dioxabicyclo[3.2.1]octane scaffold of aurovertin E. Epoxidation modifications of the precursor occur in two separate steps; bis-epoxidation of the two terminal olefins takes place first, followed by another epoxidation that occurs at C7-C8 after tetrahydrofuran formation. The O-acyltransferase aurG converts aurovertin E to aurovertin A. This chain is Acetyltransferase aurG, found in Calcarisporium arbuscula (Dendryphion arbuscula).